A 680-amino-acid polypeptide reads, in one-letter code: Probable ATP-dependent RNA helicase pitchoune (680 aa).

Residues 1-168 form a disordered region; sequence MSIREKLLMK…GKPAKDDEPF (168 aa). Over residues 29 to 42 the composition is skewed to polar residues; sequence KNAQKQEPPKQNGN. The segment covering 59 to 69 has biased composition (acidic residues); the sequence is DEDDDLEEDFQ. Over residues 74 to 83 the composition is skewed to basic residues; the sequence is PKKKQQKQPP. The span at 95–141 shows a compositional bias: acidic residues; it reads SESDDDEQEDEADEDSDLDEVAEVDEEDVDSGSEDDDQQEDEDEEEP. Residues 187-215 carry the Q motif motif; the sequence is FASLKGAVSEATLRAIKEMGFTEMTEIQS. Residues 218-393 enclose the Helicase ATP-binding domain; it reads LTPLLKGRDL…KLALKSEPIY (176 aa). 231 to 238 contacts ATP; the sequence is AQTGSGKT. The short motif at 341 to 344 is the DEVD box element; the sequence is DEVD. One can recognise a Helicase C-terminal domain in the interval 407-577; that stretch reads GLEQGYIVCP…DIQLQLEKLI (171 aa). The interval 659 to 680 is disordered; the sequence is GSASKQRHFKQVNRDQAKKFMR. Basic and acidic residues predominate over residues 670–680; the sequence is VNRDQAKKFMR.

It belongs to the DEAD box helicase family. DDX18/HAS1 subfamily.

The protein resides in the nucleus. It is found in the nucleolus. It catalyses the reaction ATP + H2O = ADP + phosphate + H(+). Functionally, probable RNA-dependent helicase. Functions in cell growth and proliferation. May have a role in ribosome biogenesis and, consequently, in protein biosynthesis. The protein is Probable ATP-dependent RNA helicase pitchoune (pit) of Drosophila melanogaster (Fruit fly).